Reading from the N-terminus, the 365-residue chain is S-adenosylmethionine:tRNA ribosyltransferase-isomerase (365 aa).

Belongs to the QueA family. In terms of assembly, monomer.

The protein resides in the cytoplasm. The catalysed reaction is 7-aminomethyl-7-carbaguanosine(34) in tRNA + S-adenosyl-L-methionine = epoxyqueuosine(34) in tRNA + adenine + L-methionine + 2 H(+). It participates in tRNA modification; tRNA-queuosine biosynthesis. In terms of biological role, transfers and isomerizes the ribose moiety from AdoMet to the 7-aminomethyl group of 7-deazaguanine (preQ1-tRNA) to give epoxyqueuosine (oQ-tRNA). This chain is S-adenosylmethionine:tRNA ribosyltransferase-isomerase, found in Prochlorococcus marinus (strain NATL2A).